Reading from the N-terminus, the 240-residue chain is MRLSEILAVALVTGATAYDLPDNLKQIYEKHKGKCSKVYQKGFTNGGHSDGKSFEYCGDIEGAIFMHSSAKGGQYTNMDVDCDGANNSAGKCSNDPSGQGVTAFKDEVKKFGIPDLDANLHPYIVFGNEEHSPQFKPQKYGMEPLSVMAVVCNGKLHYGIWGDTNGGTSTGEASLSMAELCFPEEKPDGDHGHDDNDVLYIGFTGKDAVLERVPLEGKKTEDFEDSIKSIGDKLVAGLKA.

The first 17 residues, 1–17, serve as a signal peptide directing secretion; it reads MRLSEILAVALVTGATA. A glycan (N-linked (GlcNAc...) asparagine) is linked at N86.

It belongs to the glycosyl hydrolase 75 family.

Its subcellular location is the secreted. The enzyme catalyses Endohydrolysis of beta-(1-&gt;4)-linkages between D-glucosamine residues in a partly acetylated chitosan.. In terms of biological role, chitosanase catalyzing the endo-type cleavage of chitosan, the deacylated form of chitin. Chitosanase may be crucial in the degradation of the deacetylated portion of chitin in the fungal cell wall. Chitoolisaccharides produced by the hydrolysis of partially N-acetylated chitosan are known to have many biological activities, including antibacterial activity, immune-enhancing effects, and elicitor activity. This chain is Endo-chitosanase B (csnB), found in Aspergillus oryzae (Yellow koji mold).